The primary structure comprises 359 residues: Pyruvate dehydrogenase E1 component subunit beta, mitochondrial (359 aa).

The transit peptide at 1 to 30 (MAAVSGLVRRPLREVSGLLKRRFHWTAPAA) directs the protein to the mitochondrion. The residue at position 67 (Tyr67) is a Phosphotyrosine. Position 89 (Glu89) interacts with thiamine diphosphate. K(+)-binding residues include Ile142, Ala190, Ile191, Asp193, and Asn195. At Lys354 the chain carries N6-acetyllysine.

In terms of assembly, heterotetramer of two PDHA1 and two PDHB subunits. The heterotetramer interacts with DLAT, and is part of the multimeric pyruvate dehydrogenase complex that contains multiple copies of pyruvate dehydrogenase (E1), dihydrolipoamide acetyltransferase (DLAT, E2) and lipoamide dehydrogenase (DLD, E3). These subunits are bound to an inner core composed of about 48 DLAT and 12 PDHX molecules. Interacts with DLAT. It depends on thiamine diphosphate as a cofactor.

The protein resides in the mitochondrion matrix. The enzyme catalyses N(6)-[(R)-lipoyl]-L-lysyl-[protein] + pyruvate + H(+) = N(6)-[(R)-S(8)-acetyldihydrolipoyl]-L-lysyl-[protein] + CO2. In terms of biological role, the pyruvate dehydrogenase complex catalyzes the overall conversion of pyruvate to acetyl-CoA and CO(2), and thereby links the glycolytic pathway to the tricarboxylic cycle. This is Pyruvate dehydrogenase E1 component subunit beta, mitochondrial (PDHB) from Homo sapiens (Human).